A 327-amino-acid chain; its full sequence is cAMP-dependent protein kinase regulatory subunit (327 aa).

Residues 1 to 47 are disordered; that stretch reads MTNNISHNQKATEKVEAQNNNNITRKRRGAISSEPLGDKPATPLPNI. The segment at 1–65 is dimerization and phosphorylation; the sequence is MTNNISHNQK…RLEQALSNNI (65 aa). Positions 27–31 match the Pseudophosphorylation motif motif; the sequence is RRGAI. Residue serine 32 is modified to Phosphoserine. 3',5'-cyclic AMP is bound by residues 66–188, glutamate 136, arginine 145, 189–327, glutamate 262, and arginine 271; these read MFSH…EKVS and ILRH…SQKS.

It belongs to the cAMP-dependent kinase regulatory chain family. As to quaternary structure, in Dictyostelium the holoenzyme is a dimer composed of a regulatory (R) and a catalytic (C) subunit. In the presence of cAMP it dissociates into the active C subunit and an R monomer. In other eukaryotes the holoenzyme is a tetramer composed of 2 regulatory (R) and 2 catalytic (C) subunits. In the presence of cAMP it dissociates into active monomeric C subunits and an R dimer. The pseudophosphorylation site binds to the substrate-binding region of the catalytic chain but is not phosphorylated. The physiological significance of phosphorylations by other kinases is unclear.

In Dictyostelium discoideum (Social amoeba), this protein is cAMP-dependent protein kinase regulatory subunit (pkaR).